Consider the following 438-residue polypeptide: UDP-N-acetylmuramoylalanine--D-glutamate ligase (438 aa).

112-118 (GSNGKST) contacts ATP.

The protein belongs to the MurCDEF family.

Its subcellular location is the cytoplasm. The enzyme catalyses UDP-N-acetyl-alpha-D-muramoyl-L-alanine + D-glutamate + ATP = UDP-N-acetyl-alpha-D-muramoyl-L-alanyl-D-glutamate + ADP + phosphate + H(+). The protein operates within cell wall biogenesis; peptidoglycan biosynthesis. Its function is as follows. Cell wall formation. Catalyzes the addition of glutamate to the nucleotide precursor UDP-N-acetylmuramoyl-L-alanine (UMA). The chain is UDP-N-acetylmuramoylalanine--D-glutamate ligase from Salmonella typhimurium (strain LT2 / SGSC1412 / ATCC 700720).